A 326-amino-acid chain; its full sequence is uncharacterized protein (326 aa).

Helical transmembrane passes span Trp-9–Leu-29 and Ile-33–Tyr-53. NADP(+)-binding residues include Asp-120, Asn-148, Tyr-214, Lys-218, and Thr-252. Tyr-214 acts as the Proton acceptor in catalysis. Lys-218 serves as the catalytic Lowers pKa of active site Tyr.

Belongs to the short-chain dehydrogenases/reductases (SDR) family.

Its subcellular location is the mitochondrion membrane. Functionally, involved in the resistance to DNA-damaging agents. This is an uncharacterized protein from Saccharomyces cerevisiae (strain ATCC 204508 / S288c) (Baker's yeast).